Here is a 272-residue protein sequence, read N- to C-terminus: Undecaprenyl-diphosphatase (272 aa).

Transmembrane regions (helical) follow at residues 4–24 (IHSL…EFLP), 45–65 (AETF…VMFW), 89–109 (LTLG…LVFH), 115–135 (LFNP…LIAA), 152–174 (TYRQ…FSRS), 189–209 (YAAS…ATAL), 225–245 (MFAV…KTFL), and 251–271 (ISFI…YVVF).

Belongs to the UppP family.

The protein localises to the cell inner membrane. The enzyme catalyses di-trans,octa-cis-undecaprenyl diphosphate + H2O = di-trans,octa-cis-undecaprenyl phosphate + phosphate + H(+). Functionally, catalyzes the dephosphorylation of undecaprenyl diphosphate (UPP). Confers resistance to bacitracin. The protein is Undecaprenyl-diphosphatase of Citrobacter koseri (strain ATCC BAA-895 / CDC 4225-83 / SGSC4696).